The primary structure comprises 449 residues: Phosphoglucosamine mutase (449 aa).

The active-site Phosphoserine intermediate is the Ser-102. Residues Ser-102, Asp-241, Asp-243, and Asp-245 each coordinate Mg(2+). Ser-102 is modified (phosphoserine).

This sequence belongs to the phosphohexose mutase family. Requires Mg(2+) as cofactor. In terms of processing, activated by phosphorylation.

The enzyme catalyses alpha-D-glucosamine 1-phosphate = D-glucosamine 6-phosphate. Catalyzes the conversion of glucosamine-6-phosphate to glucosamine-1-phosphate. The sequence is that of Phosphoglucosamine mutase from Pseudoalteromonas translucida (strain TAC 125).